Here is a 529-residue protein sequence, read N- to C-terminus: HTH-type transcriptional activator Btr (529 aa).

A DNA-binding region (H-T-H motif) is located at residues 182–201 (LAQLSQMAGISAKHYSESFK). In terms of domain architecture, Fe/B12 periplasmic-binding spans 268–528 (KIAAYGRGTM…QTVSLLSGDC (261 aa)).

Binds with high affinity to both apo-bacillibactin and iron-bacillibactin.

Its subcellular location is the cytoplasm. Its function is as follows. In iron-limited conditions, activates expression of the feuABCybbA operon, which encodes the bacillibactin uptake system. Acts by binding directly to a conserved direct repeat element upstream of the feuA promoter. Activity is increased in the presence of bacillibactin. The protein is HTH-type transcriptional activator Btr (btr) of Bacillus subtilis (strain 168).